We begin with the raw amino-acid sequence, 388 residues long: Putative membrane protein MJ1562 (388 aa).

Transmembrane regions (helical) follow at residues 22-42, 219-239, 246-266, 273-293, 320-340, and 351-371; these read FLML…ATNV, SQSF…IIYF, IMPL…MGLL, ATAG…IHLM, AVMA…LAPL, and ALGI…LIVI.

This sequence belongs to the resistance-nodulation-cell division (RND) (TC 2.A.6) family. MmpL subfamily.

The protein resides in the cell membrane. In Methanocaldococcus jannaschii (strain ATCC 43067 / DSM 2661 / JAL-1 / JCM 10045 / NBRC 100440) (Methanococcus jannaschii), this protein is Putative membrane protein MJ1562.